The following is a 658-amino-acid chain: DNA mismatch repair protein MutL (658 aa).

Over residues 114–130 (RQEDSSHATQVKAEDGK) the composition is skewed to basic and acidic residues. Disordered regions lie at residues 114–138 (RQED…TAAA) and 353–405 (PMPS…HSLS). Residues 361–372 (ENLFDSASNHPT) are compositionally biased toward polar residues.

The protein belongs to the DNA mismatch repair MutL/HexB family.

This protein is involved in the repair of mismatches in DNA. It is required for dam-dependent methyl-directed DNA mismatch repair. May act as a 'molecular matchmaker', a protein that promotes the formation of a stable complex between two or more DNA-binding proteins in an ATP-dependent manner without itself being part of a final effector complex. This is DNA mismatch repair protein MutL from Neisseria gonorrhoeae (strain NCCP11945).